Reading from the N-terminus, the 113-residue chain is UPF0482 protein YnfB (113 aa).

Residues 1 to 28 form the signal peptide; sequence MNILSGKLPFLLGAVFAGSVVLATSVQA.

The protein belongs to the UPF0482 family.

This Escherichia fergusonii (strain ATCC 35469 / DSM 13698 / CCUG 18766 / IAM 14443 / JCM 21226 / LMG 7866 / NBRC 102419 / NCTC 12128 / CDC 0568-73) protein is UPF0482 protein YnfB.